A 254-amino-acid polypeptide reads, in one-letter code: Nickel import ATP-binding protein NikD (254 aa).

One can recognise an ABC transporter domain in the interval 2–241; it reads PQQIELRNIA…PKHAVTRSLV (240 aa). 36-43 is an ATP binding site; it reads GGSGSGKS.

It belongs to the ABC transporter superfamily. Nickel importer (TC 3.A.1.5.3) family. In terms of assembly, the complex is composed of two ATP-binding proteins (NikD and NikE), two transmembrane proteins (NikB and NikC) and a solute-binding protein (NikA).

It localises to the cell inner membrane. The enzyme catalyses Ni(2+)(out) + ATP + H2O = Ni(2+)(in) + ADP + phosphate + H(+). Functionally, part of the ABC transporter complex NikABCDE involved in nickel import. Responsible for energy coupling to the transport system. In Escherichia coli O157:H7, this protein is Nickel import ATP-binding protein NikD.